The primary structure comprises 815 residues: Probable receptor-like protein kinase At2g39360 (815 aa).

An N-terminal signal peptide occupies residues 1-26 (MINLKLFLELKLCFLITLLCSSHISS). At 27-407 (VSDTFFINCG…SSSNKSSNTS (381 aa)) the chain is on the extracellular side. Asn-40, Asn-45, Asn-125, Asn-146, Asn-209, Asn-244, Asn-277, Asn-331, Asn-355, Asn-401, and Asn-405 each carry an N-linked (GlcNAc...) asparagine glycan. A helical membrane pass occupies residues 408–428 (VGLIAGLSAALCVALVFGVVV). Residues 429–815 (SWWCIRKRRR…FAQMVREETR (387 aa)) are Cytoplasmic-facing. A Protein kinase domain is found at 487–761 (FDESLVIGVG…GDLLWNLEFM (275 aa)). ATP contacts are provided by residues 493–501 (IGVGGFGKV) and Lys-515. Catalysis depends on Asp-612, which acts as the Proton acceptor.

Belongs to the protein kinase superfamily. Ser/Thr protein kinase family.

Its subcellular location is the cell membrane. The polypeptide is Probable receptor-like protein kinase At2g39360 (Arabidopsis thaliana (Mouse-ear cress)).